Consider the following 468-residue polypeptide: Peroxisome proliferator-activated receptor alpha (468 aa).

Positions 99–173 (NIECRICGDK…VGMSHNAIRF (75 aa)) form a DNA-binding region, nuclear receptor. NR C4-type zinc fingers lie at residues 102 to 122 (CRIC…CEGC) and 139 to 161 (CDRS…FHKC). An NR LBD domain is found at 239-466 (FVIHDMETLC…HPLLQEIYRD (228 aa)). The required for heterodimerization with RXRA stretch occupies residues 304–433 (DQVTLLKYGV…PKLLQKMVDL (130 aa)).

This sequence belongs to the nuclear hormone receptor family. NR1 subfamily. In terms of assembly, heterodimer; with RXRA. This heterodimerization is required for DNA binding and transactivation activity. Interacts with NCOA3 coactivator. Interacts with CITED2; the interaction stimulates its transcriptional activity. Also interacts with PPARBP in vitro. Interacts with AKAP13, LPIN1, PRDM16 and coactivator NCOA6. Interacts with ASXL1 and ASXL2. Interacts with PER2. Interacts with SIRT1; the interaction seems to be modulated by NAD(+) levels. Interacts with CRY1 and CRY2. In hepatocytes, interacts with PAQR3 and HUWE1; the interactions promote PPARA poylubiquitination and HUWE1-mediated degradation. In terms of processing, phosphorylated. Post-translationally, ubiquitinated by E3 ubiquitin-protein ligase HUWE1; leading to proteasomal degradation. As to expression, expressed predominantly in liver and kidney.

It localises to the nucleus. Ligand-activated transcription factor. Key regulator of lipid metabolism. Activated by the endogenous ligand 1-palmitoyl-2-oleoyl-sn-glycerol-3-phosphocholine (16:0/18:1-GPC). Activated by oleylethanolamide, a naturally occurring lipid that regulates satiety. Receptor for peroxisome proliferators such as hypolipidemic drugs and fatty acids. Regulates the peroxisomal beta-oxidation pathway of fatty acids. Functions as a transcription activator for the ACOX1 and P450 genes. Transactivation activity requires heterodimerization with RXRA and is antagonized by NR2C2. May be required for the propagation of clock information to metabolic pathways regulated by PER2. This is Peroxisome proliferator-activated receptor alpha (Ppara) from Rattus norvegicus (Rat).